Here is a 199-residue protein sequence, read N- to C-terminus: Recombination protein RecR (199 aa).

Residues 57–72 form a C4-type zinc finger; that stretch reads CSVCGNITEQDPCAIC. The region spanning 80–176 is the Toprim domain; the sequence is STIMVVEEAK…KVTRLAAGLA (97 aa).

The protein belongs to the RecR family.

May play a role in DNA repair. It seems to be involved in an RecBC-independent recombinational process of DNA repair. It may act with RecF and RecO. The polypeptide is Recombination protein RecR (Lactobacillus delbrueckii subsp. bulgaricus (strain ATCC BAA-365 / Lb-18)).